A 276-amino-acid polypeptide reads, in one-letter code: Probable endonuclease 4 (276 aa).

His-70, His-108, Glu-143, Asp-176, His-179, His-210, Asp-223, His-225, and Glu-255 together coordinate Zn(2+).

The protein belongs to the AP endonuclease 2 family. Zn(2+) serves as cofactor.

The catalysed reaction is Endonucleolytic cleavage to 5'-phosphooligonucleotide end-products.. In terms of biological role, endonuclease IV plays a role in DNA repair. It cleaves phosphodiester bonds at apurinic or apyrimidinic (AP) sites, generating a 3'-hydroxyl group and a 5'-terminal sugar phosphate. The protein is Probable endonuclease 4 of Mesomycoplasma hyopneumoniae (strain J / ATCC 25934 / NCTC 10110) (Mycoplasma hyopneumoniae).